A 303-amino-acid polypeptide reads, in one-letter code: Quinolinate synthase (303 aa).

Residues H24 and S41 each coordinate iminosuccinate. C86 contacts [4Fe-4S] cluster. Residues 112-114 (YVN) and S129 each bind iminosuccinate. C172 contributes to the [4Fe-4S] cluster binding site. Iminosuccinate is bound by residues 198–200 (HPE) and T215. C260 is a [4Fe-4S] cluster binding site.

Belongs to the quinolinate synthase family. Type 2 subfamily. [4Fe-4S] cluster is required as a cofactor.

It is found in the cytoplasm. It carries out the reaction iminosuccinate + dihydroxyacetone phosphate = quinolinate + phosphate + 2 H2O + H(+). Its pathway is cofactor biosynthesis; NAD(+) biosynthesis; quinolinate from iminoaspartate: step 1/1. In terms of biological role, catalyzes the condensation of iminoaspartate with dihydroxyacetone phosphate to form quinolinate. In Clostridium kluyveri (strain NBRC 12016), this protein is Quinolinate synthase.